The primary structure comprises 976 residues: MELWAARACFVLLWGCALAPATAAQGKEVVLLDFAAAGGELGWLTHPYGKGWDLMQNIMNDMPIYMYSVCNVMSGDQDNWLRTNWVYRGEAERIFIELKFTVRDCNSFPGGASSCKETFNLYYAESDLDYGTNFQKRLFTKIDTIAPDEITVSSDFEARHVKLNVEERSVGPLTRKGFYLAFQDIGACVALLSVRVYYKKCPELLQSLARFPETIAGSDAPSLATVAGTCVDHAVVPPGGEEPRMHCAVDGEWLVPIGQCLCQAGYEKVEDACQACSPGFFKFEVSESPCLECPEHTLPSPEGATSCECEEGFFRAPQDPMSMPCTRPPSAPHYLTAVGMGAKVELRWTPPQDSGGREDIVYSVTCEQCWPESGECGPCESSVRYSEPPHGLTRTSVTVSDLEPHMNYTFTVEARNGVSGLVTSRSFRTASVSINQTEPPKVRLEGRSTTSLSVSWSIPPPQQSRVWKYEVTYRKKGDSNSYNVRRTEGFSVTLDDLAPDTTYLVQVQALTQEGQGAGSKVHEFQTLSPEGSGSLAVIGGVAVCVVLLLLLAGAGFFIHRRRKNLRARQSPEDVYFSKSEQLKPLKTYVDPHTYEDPNQAVLKFTTEIHPSCVTRQKVIGAGEFGEVYKGTLKTSSGKKEVPVAIKTLKAGYTEKQRVDFLGEAGIMGQFSHHNIIRLEGVISKYKPMMIITEFMENGALDKFLREKDGEFSVLQLVGMLRGIAAGMKYLANMNYVHRDLAARNILVNSNLVCKVSDFGLSRVLEDDPEATYTTSGGKIPIRWTAPEAISYRKFTSASDVWSFGIVMWEVMTYGERPYWELSNHEVMKAINDGFRLPTPMDCPSAIYQLMMQCWQQERARRPKFADIVSILDKLIRAPDSLKTLADFDPRVSIRLPSTSGSEGVPFRTVSEWLESIKMQQYTEHFMAAGYTAIEKVVQMTNDDIKRIGVRLPGHQKRIAYSLLGLKDQVNTVGIPI.

The N-terminal stretch at 1-23 (MELWAARACFVLLWGCALAPATA) is a signal peptide. Residues 1–206 (MELWAARACF…YYKKCPELLQ (206 aa)) form a mediates interaction with CLDN4 region. At 25–537 (QGKEVVLLDF…SPEGSGSLAV (513 aa)) the chain is on the extracellular side. The region spanning 28–206 (EVVLLDFAAA…YYKKCPELLQ (179 aa)) is the Eph LBD domain. 2 cysteine pairs are disulfide-bonded: Cys-70/Cys-188 and Cys-105/Cys-115. One can recognise a Fibronectin type-III 1 domain in the interval 328-432 (PPSAPHYLTA…TSRSFRTASV (105 aa)). Asn-407 and Asn-435 each carry an N-linked (GlcNAc...) asparagine glycan. A Fibronectin type-III 2 domain is found at 438–529 (EPPKVRLEGR…KVHEFQTLSP (92 aa)). The chain crosses the membrane as a helical span at residues 538–558 (IGGVAVCVVLLLLLAGAGFFI). The Cytoplasmic portion of the chain corresponds to 559–976 (HRRRKNLRAR…DQVNTVGIPI (418 aa)). Ser-570 is modified (phosphoserine). Tyr-575 is modified (phosphotyrosine). A Phosphoserine modification is found at Ser-579. Position 588 is a phosphotyrosine; by autocatalysis (Tyr-588). Phosphotyrosine is present on Tyr-594. The segment at 606–906 (TEIHPSCVTR…STSGSEGVPF (301 aa)) is mediates interaction with ARHGEF16. The region spanning 613 to 875 (VTRQKVIGAG…DIVSILDKLI (263 aa)) is the Protein kinase domain. 619-627 (IGAGEFGEV) contributes to the ATP binding site. The residue at position 628 (Tyr-628) is a Phosphotyrosine. Lys-646 is a binding site for ATP. Thr-647 is modified (phosphothreonine). Position 735 is a phosphotyrosine; by autocatalysis (Tyr-735). Catalysis depends on Asp-739, which acts as the Proton acceptor. A Phosphotyrosine modification is found at Tyr-772. Phosphoserine is present on residues Ser-869, Ser-892, Ser-897, and Ser-901. A negatively regulates interaction with ARHGEF16 region spans residues 886–976 (DFDPRVSIRL…DQVNTVGIPI (91 aa)). An SAM domain is found at 904–968 (VPFRTVSEWL…AYSLLGLKDQ (65 aa)). Tyr-921 bears the Phosphotyrosine; by autocatalysis mark. Position 930 is a phosphotyrosine (Tyr-930). The PDZ-binding motif lies at 974–976 (IPI).

This sequence belongs to the protein kinase superfamily. Tyr protein kinase family. Ephrin receptor subfamily. Homodimer. Interacts with SLA. Interacts (phosphorylated form) with VAV2, VAV3 and PI3-kinase p85 subunit (PIK3R1, PIK3R2 or PIK3R3); critical for the EFNA1-induced activation of RAC1 which stimulates cell migration. Interacts with INPPL1; regulates activated EPHA2 endocytosis and degradation. Interacts (inactivated form) with PTK2/FAK1 and interacts (EFNA1 ligand-activated form) with PTPN11; regulates integrin-mediated adhesion. Interacts with ARHGEF16, DOCK4 and ELMO2; mediates ligand-independent activation of RAC1 which stimulates cell migration. Interacts with CLDN4; phosphorylates CLDN4 and may regulate tight junctions. Interacts with ACP1. Interacts with ANKS1A. Interacts with CEMIP. Interacts with NCK1; may regulate EPHA2 activity in cell migration and adhesion. Interacts with TIMD4. Post-translationally, autophosphorylates. Phosphorylated on tyrosine upon binding and activation by EFNA1. Phosphorylated residues Tyr-588 and Tyr-594 are required for binding VAV2 and VAV3 while phosphorylated residues Tyr-735 and Tyr-930 are required for binding PI3-kinase p85 subunit (PIK3R1, PIK3R2 or PIK3R3). These phosphorylated residues are critical for recruitment of VAV2 and VAV3 and PI3-kinase p85 subunit which transduce downstream signaling to activate RAC1 GTPase and cell migration. Dephosphorylation of Tyr-930 by PTPRF prevents the interaction of EPHA2 with NCK1. Phosphorylated at Ser-897 by PKB; serum-induced phosphorylation which targets EPHA2 to the cell leading edge and stimulates cell migration. Phosphorylation by PKB is inhibited by EFNA1-activated EPHA2 which regulates PKB activity via a reciprocal regulatory loop. Phosphorylated at Ser-897 in response to TNF by RPS6KA1 and RPS6KA3; RPS6KA-EPHA2 signaling pathway controls cell migration. Phosphorylated at Ser-897 by PKA; blocks cell retraction induced by EPHA2 kinase activity. Dephosphorylated by ACP1. Ubiquitinated by CHIP/STUB1. Ubiquitination is regulated by the HSP90 chaperone and regulates the receptor stability and activity through proteasomal degradation. ANKS1A prevents ubiquitination and degradation.

It is found in the cell membrane. The protein resides in the cell projection. Its subcellular location is the ruffle membrane. The protein localises to the lamellipodium membrane. It localises to the cell junction. It is found in the focal adhesion. The enzyme catalyses L-tyrosyl-[protein] + ATP = O-phospho-L-tyrosyl-[protein] + ADP + H(+). Functionally, receptor tyrosine kinase which binds promiscuously membrane-bound ephrin-A family ligands residing on adjacent cells, leading to contact-dependent bidirectional signaling into neighboring cells. The signaling pathway downstream of the receptor is referred to as forward signaling while the signaling pathway downstream of the ephrin ligand is referred to as reverse signaling. Activated by the ligand ephrin-A1/EFNA1 regulates migration, integrin-mediated adhesion, proliferation and differentiation of cells. Regulates cell adhesion and differentiation through DSG1/desmoglein-1 and inhibition of the ERK1/ERK2 signaling pathway. May also participate in UV radiation-induced apoptosis and have a ligand-independent stimulatory effect on chemotactic cell migration. During development, may function in distinctive aspects of pattern formation and subsequently in development of several fetal tissues. Involved for instance in angiogenesis, in early hindbrain development and epithelial proliferation and branching morphogenesis during mammary gland development. Engaged by the ligand ephrin-A5/EFNA5 may regulate lens fiber cells shape and interactions and be important for lens transparency development and maintenance. With ephrin-A2/EFNA2 may play a role in bone remodeling through regulation of osteoclastogenesis and osteoblastogenesis. The protein is Ephrin type-A receptor 2 (EPHA2) of Macaca fascicularis (Crab-eating macaque).